We begin with the raw amino-acid sequence, 819 residues long: DNA topoisomerase 4 subunit A (819 aa).

The 467-residue stretch at 30-496 (LPDIRDGLKP…QIIEIDTASL (467 aa)) folds into the Topo IIA-type catalytic domain. Tyrosine 118 acts as the O-(5'-phospho-DNA)-tyrosine intermediate in catalysis.

It belongs to the type II topoisomerase GyrA/ParC subunit family. ParC type 2 subfamily. As to quaternary structure, heterotetramer composed of ParC and ParE.

Its subcellular location is the cell membrane. It carries out the reaction ATP-dependent breakage, passage and rejoining of double-stranded DNA.. Topoisomerase IV is essential for chromosome segregation. It relaxes supercoiled DNA. Performs the decatenation events required during the replication of a circular DNA molecule. The chain is DNA topoisomerase 4 subunit A from Streptococcus pyogenes serotype M18 (strain MGAS8232).